Reading from the N-terminus, the 549-residue chain is Cation/acetate symporter ActP (549 aa).

13 helical membrane passes run 33-53, 77-97, 103-123, 148-168, 183-203, 206-226, 262-282, 303-323, 355-375, 404-424, 428-448, 464-484, and 493-513; these read WQAI…TYWA, LAIA…ALVF, GLIY…LIAE, ILSA…QMVG, IAVV…GMLA, WVQI…AFMV, ISAL…PHIL, GFMG…IMLV, LFLG…VAGL, VSKI…VLFE, IAFM…PIIL, GGWL…TIWV, and IFPY…GIWF.

This sequence belongs to the sodium:solute symporter (SSF) (TC 2.A.21) family.

It localises to the cell inner membrane. In terms of biological role, transports acetate. The polypeptide is Cation/acetate symporter ActP (Salmonella agona (strain SL483)).